The primary structure comprises 548 residues: Druantia protein DruB (548 aa).

The protein localises to the cytoplasm. Functionally, component of antiviral defense system Druantia type I, composed of DruA, DruB, DruC, DruD and DruE. Expression of Druantia in E.coli (strain MG1655) confers resistance to phage lambda, SECphi18, SECphi27 and T4. The protein is Druantia protein DruB of Escherichia coli (strain UMEA 4076-1).